Consider the following 375-residue polypeptide: Queuine tRNA-ribosyltransferase (375 aa).

The active-site Proton acceptor is the D89. Substrate-binding positions include 89-93 (DSGGF), D143, Q187, and G214. The segment at 245-251 (GVGKPED) is RNA binding. The Nucleophile role is filled by D264. The segment at 269–273 (TRNAR) is RNA binding; important for wobble base 34 recognition. Zn(2+) is bound by residues C302, C304, C307, and H333.

It belongs to the queuine tRNA-ribosyltransferase family. In terms of assembly, homodimer. Within each dimer, one monomer is responsible for RNA recognition and catalysis, while the other monomer binds to the replacement base PreQ1. The cofactor is Zn(2+).

The catalysed reaction is 7-aminomethyl-7-carbaguanine + guanosine(34) in tRNA = 7-aminomethyl-7-carbaguanosine(34) in tRNA + guanine. Its pathway is tRNA modification; tRNA-queuosine biosynthesis. Functionally, catalyzes the base-exchange of a guanine (G) residue with the queuine precursor 7-aminomethyl-7-deazaguanine (PreQ1) at position 34 (anticodon wobble position) in tRNAs with GU(N) anticodons (tRNA-Asp, -Asn, -His and -Tyr). Catalysis occurs through a double-displacement mechanism. The nucleophile active site attacks the C1' of nucleotide 34 to detach the guanine base from the RNA, forming a covalent enzyme-RNA intermediate. The proton acceptor active site deprotonates the incoming PreQ1, allowing a nucleophilic attack on the C1' of the ribose to form the product. After dissociation, two additional enzymatic reactions on the tRNA convert PreQ1 to queuine (Q), resulting in the hypermodified nucleoside queuosine (7-(((4,5-cis-dihydroxy-2-cyclopenten-1-yl)amino)methyl)-7-deazaguanosine). The protein is Queuine tRNA-ribosyltransferase of Enterobacter sp. (strain 638).